Reading from the N-terminus, the 1220-residue chain is Plasma membrane calcium-transporting ATPase 1 (1220 aa).

At Gly-2 the chain carries N-acetylglycine. The Cytoplasmic portion of the chain corresponds to 2–105; sequence GDMANNSVAY…KTFLQLVWEA (104 aa). 2 positions are modified to phosphoserine: Ser-8 and Ser-17. The chain crosses the membrane as a helical span at residues 106–126; it reads LQDVTLIILEIAAIVSLGLSF. At 127 to 154 the chain is on the extracellular side; sequence YQPPEGDNALCGEVSVGEEEGEGETGWI. The chain crosses the membrane as a helical span at residues 155–175; sequence EGAAILLSVVCVVLVTAFNDW. Topologically, residues 176 to 366 are cytoplasmic; that stretch reads SKEKQFRGLQ…KEKSVLQGKL (191 aa). Residues 297–356 are disordered; it reads EEEKKDEKKKEKKNKKQDGAIENRNKAKAQDGAAMEMQPLKSEEGGDGDEKDKKKANLPK. Composition is skewed to basic and acidic residues over residues 312–325 and 337–356; these read KQDG…KAKA and KSEE…NLPK. The residue at position 338 (Ser-338) is a Phosphoserine. A helical transmembrane segment spans residues 367–386; the sequence is TKLAVQIGKAGLLMSAITVI. Topologically, residues 387 to 418 are extracellular; the sequence is ILVLYFVIDTFWVQKRPWLAECTPIYIQYFVK. Residues 419 to 439 traverse the membrane as a helical segment; that stretch reads FFIIGVTVLVVAVPEGLPLAV. The Cytoplasmic segment spans residues 440–855; it reads TISLAYSVKK…RNVYDSISKF (416 aa). Residue Asp-475 is the 4-aspartylphosphate intermediate of the active site. Mg(2+) is bound by residues Asp-475, Thr-477, and Asp-797. Residues 856 to 876 form a helical membrane-spanning segment; sequence LQFQLTVNVVAVIVAFTGACI. The Extracellular portion of the chain corresponds to 877-882; the sequence is TQDSPL. Residues 883–903 form a helical membrane-spanning segment; sequence KAVQMLWVNLIMDTLASLALA. Residues 904 to 927 are Cytoplasmic-facing; it reads TEPPTESLLLRKPYGRNKPLISRT. The chain crosses the membrane as a helical span at residues 928 to 948; that stretch reads MMKNILGHAFYQLVVVFTLLF. The Extracellular segment spans residues 949-971; the sequence is AGEKFFDIDSGRNAPLHAPPSEH. The helical transmembrane segment at 972-991 threads the bilayer; sequence YTIVFNTFVLMQLFNEINAR. Topologically, residues 992–1005 are cytoplasmic; the sequence is KIHGERNVFEGIFN. Residues 1006 to 1027 traverse the membrane as a helical segment; it reads NAIFCTIVLGTFVVQIIIVQFG. The Extracellular segment spans residues 1028–1039; that stretch reads GKPFSCSELSIE. The helical transmembrane segment at 1040 to 1060 threads the bilayer; sequence QWLWSIFLGMGTLLWGQLIST. The Cytoplasmic segment spans residues 1061–1220; sequence IPTSRLKFLK…SPLHSLETSL (160 aa). The calmodulin-binding subdomain A stretch occupies residues 1100 to 1117; the sequence is LRRGQILWFRGLNRIQTQ. At Thr-1116 the chain carries Phosphothreonine; by PKC. Positions 1118-1220 are required for basolateral membrane targeting; the sequence is IRVVNAFRSS…SPLHSLETSL (103 aa). Residues Ser-1140 and Ser-1155 each carry the phosphoserine modification. Residues 1160 to 1220 form a disordered region; the sequence is PLIDDTDAED…SPLHSLETSL (61 aa). A Phosphothreonine modification is found at Thr-1165. Phosphoserine is present on residues Ser-1178 and Ser-1182. A compositionally biased stretch (polar residues) spans 1200–1220; the sequence is MNKSATSSSPGSPLHSLETSL.

Belongs to the cation transport ATPase (P-type) (TC 3.A.3) family. Type IIB subfamily. Monomer. Dimer. Oligomer. Calmodulin binding. Interacts with PDZD11. Interacts with SLC35G1 and STIM1. Interacts with YWHAE; interacts with the monomeric and dimeric forms of the YWHAE but prefer the monomer form; this interaction inhibits calcium-transporting ATPase activity. Interacts with NPTN; this interaction stabilizes ATP2B1 and increases ATPase activity; this interaction controls T cell calcium homeostasis following T cell activation. Interacts with EPB41; regulates small intestinal calcium absorption through regulation of membrane expression of ATP2B1. As to expression, expressed in the retina, with strongest expression in the outer plexiform layer and lower expression levels in the inner nuclear layer and the inner plexiform layer. Specifically expressed in the following retinal cell types: photoreceptor cells, cone bipolar cells and horizontal cells. Expressed in osteoclasts (at protein level). Expressed at highest levels in brain, intestine, kidney, and stomach, and at lower levels in liver, lung, aorta, portal vein, urinary bladder, diaphragm, seminal vesicles and testes. Expressed in small intestinal epithelium.

The protein localises to the cell membrane. It is found in the basolateral cell membrane. It localises to the synapse. The protein resides in the presynaptic cell membrane. Its subcellular location is the cytoplasmic vesicle. The protein localises to the secretory vesicle. It is found in the synaptic vesicle membrane. It catalyses the reaction Ca(2+)(in) + ATP + H2O = Ca(2+)(out) + ADP + phosphate + H(+). Its function is as follows. Catalyzes the hydrolysis of ATP coupled with the transport of calcium from the cytoplasm to the extracellular space thereby maintaining intracellular calcium homeostasis. Plays a role in blood pressure regulation through regulation of intracellular calcium concentration and nitric oxide production leading to regulation of vascular smooth muscle cells vasoconstriction. Positively regulates bone mineralization through absorption of calcium from the intestine. Plays dual roles in osteoclast differentiation and survival by regulating RANKL-induced calcium oscillations in preosteoclasts and mediating calcium extrusion in mature osteoclasts. Regulates insulin sensitivity through calcium/calmodulin signaling pathway by regulating AKT1 activation and NOS3 activation in endothelial cells. May play a role in synaptic transmission by modulating calcium and proton dynamics at the synaptic vesicles. This is Plasma membrane calcium-transporting ATPase 1 from Mus musculus (Mouse).